A 232-amino-acid chain; its full sequence is tRNA (guanine-N(1)-)-methyltransferase (232 aa).

S-adenosyl-L-methionine is bound by residues Gly108 and 128–133 (IGDFIM).

It belongs to the RNA methyltransferase TrmD family. In terms of assembly, homodimer.

The protein localises to the cytoplasm. It carries out the reaction guanosine(37) in tRNA + S-adenosyl-L-methionine = N(1)-methylguanosine(37) in tRNA + S-adenosyl-L-homocysteine + H(+). In terms of biological role, specifically methylates guanosine-37 in various tRNAs. This chain is tRNA (guanine-N(1)-)-methyltransferase, found in Campylobacter fetus subsp. fetus (strain 82-40).